The primary structure comprises 431 residues: Serine--tRNA ligase (431 aa).

237–239 (TAE) lines the L-serine pocket. 268–270 (RSE) lines the ATP pocket. Glu-291 is a binding site for L-serine. 355-358 (EISS) lines the ATP pocket. Residue Ser-390 coordinates L-serine.

The protein belongs to the class-II aminoacyl-tRNA synthetase family. Type-1 seryl-tRNA synthetase subfamily. As to quaternary structure, homodimer. The tRNA molecule binds across the dimer.

It is found in the cytoplasm. It catalyses the reaction tRNA(Ser) + L-serine + ATP = L-seryl-tRNA(Ser) + AMP + diphosphate + H(+). The enzyme catalyses tRNA(Sec) + L-serine + ATP = L-seryl-tRNA(Sec) + AMP + diphosphate + H(+). The protein operates within aminoacyl-tRNA biosynthesis; selenocysteinyl-tRNA(Sec) biosynthesis; L-seryl-tRNA(Sec) from L-serine and tRNA(Sec): step 1/1. In terms of biological role, catalyzes the attachment of serine to tRNA(Ser). Is also able to aminoacylate tRNA(Sec) with serine, to form the misacylated tRNA L-seryl-tRNA(Sec), which will be further converted into selenocysteinyl-tRNA(Sec). The protein is Serine--tRNA ligase of Neisseria gonorrhoeae (strain ATCC 700825 / FA 1090).